Here is a 505-residue protein sequence, read N- to C-terminus: Deoxyguanosinetriphosphate triphosphohydrolase (505 aa).

The 208-residue stretch at Arg-66–Cys-273 folds into the HD domain.

It belongs to the dGTPase family. Type 1 subfamily. As to quaternary structure, homotetramer. Mg(2+) serves as cofactor.

It carries out the reaction dGTP + H2O = 2'-deoxyguanosine + triphosphate + H(+). DGTPase preferentially hydrolyzes dGTP over the other canonical NTPs. The protein is Deoxyguanosinetriphosphate triphosphohydrolase of Escherichia coli O17:K52:H18 (strain UMN026 / ExPEC).